Consider the following 278-residue polypeptide: MDLASKYFNGVNWRYIDHSSGLEPMQSFAFDDTFCESVGKDISDNVVRTWIHQHTVILGIHDSRLPFLKDGIDYLTNEIGYNAIVRNSGGLGVVLDQGVLNISLMFKGQTETTIDEAFTVMYLLISKMFENENVDIDTMEIEHSYCPGKFDLSIDGKKFAGISQRRVRGGIAVQIYLCVEGSGSERALMMQTFYEHALKGEVTKFKYPEIEPSCMASLETLLNKTITVQDVMFLLLYAIKDLGGVLNMTPITQEEWQRYDTYFDKMIERNKKMIDQMQ.

Residues 41–247 (DISDNVVRTW…AIKDLGGVLN (207 aa)) enclose the BPL/LPL catalytic domain. Cys-146 (acyl-thioester intermediate) is an active-site residue.

Belongs to the octanoyltransferase LipL family.

The catalysed reaction is N(6)-octanoyl-L-lysyl-[glycine-cleavage complex H protein] + L-lysyl-[lipoyl-carrier protein] = N(6)-octanoyl-L-lysyl-[lipoyl-carrier protein] + L-lysyl-[glycine-cleavage complex H protein]. The protein operates within protein modification; protein lipoylation via endogenous pathway; protein N(6)-(lipoyl)lysine from octanoyl-[acyl-carrier-protein]. Catalyzes the amidotransfer (transamidation) of the octanoyl moiety from octanoyl-GcvH to the lipoyl domain of the E2 subunit of lipoate-dependent enzymes. The sequence is that of Octanoyl-[GcvH]:protein N-octanoyltransferase from Staphylococcus aureus (strain NCTC 8325 / PS 47).